The primary structure comprises 304 residues: Homoserine kinase (304 aa).

90 to 100 (PLARGLGSSAS) contacts ATP.

Belongs to the GHMP kinase family. Homoserine kinase subfamily.

Its subcellular location is the cytoplasm. The catalysed reaction is L-homoserine + ATP = O-phospho-L-homoserine + ADP + H(+). It functions in the pathway amino-acid biosynthesis; L-threonine biosynthesis; L-threonine from L-aspartate: step 4/5. Catalyzes the ATP-dependent phosphorylation of L-homoserine to L-homoserine phosphate. The protein is Homoserine kinase of Staphylococcus aureus (strain MSSA476).